We begin with the raw amino-acid sequence, 160 residues long: Prostaglandin E synthase 3 (160 aa).

Residues M1–T90 enclose the CS domain. K33 is subject to N6-acetyllysine. A Glycyl lysine isopeptide (Lys-Gly) (interchain with G-Cter in SUMO2) cross-link involves residue K35. Position 44 is a phosphoserine (S44). K65 participates in a covalent cross-link: Glycyl lysine isopeptide (Lys-Gly) (interchain with G-Cter in SUMO2). S85, S100, S113, S118, S148, and S151 each carry phosphoserine. The segment at S124–E160 is disordered. A compositionally biased stretch (acidic residues) spans G132 to D153. Residues P157–E160 carry the PXLE motif motif.

The protein belongs to the p23/wos2 family. Probably forms a complex composed of chaperones HSP90 and HSP70, co-chaperones STIP1/HOP, CDC37, PPP5C, PTGES3/p23, TSC1 and client protein TSC2. Binds to the progesterone receptor. Interacts with TERT; the interaction, together with HSP90AA1, is required for correct assembly and stabilization of the telomerase holoenzyme complex. Interacts (via PXLE motif) with EGLN1/PHD2, recruiting EGLN1/PHD2 to the HSP90 pathway to facilitate HIF alpha proteins hydroxylation. Interacts with HSP90AA1, FLCN, FNIP1 and FNIP2. Proteolytically cleaved by caspase-7 (CASP7) in response to apoptosis, leading to its inactivation. As to expression, detected in testis and ovary, at lower levels in endometrium, myometrium, kidney and lung, and only faintly in spleen, heart and muscle (at protein level). Expressed at high levels in glandular and luminal epithelial cells of the endometrium, but also detected in stromal cells (at protein level).

The protein localises to the cytoplasm. The enzyme catalyses prostaglandin H2 = prostaglandin E2. It participates in lipid metabolism; prostaglandin biosynthesis. Functionally, cytosolic prostaglandin synthase that catalyzes the oxidoreduction of prostaglandin endoperoxide H2 (PGH2) to prostaglandin E2 (PGE2). Molecular chaperone that localizes to genomic response elements in a hormone-dependent manner and disrupts receptor-mediated transcriptional activation, by promoting disassembly of transcriptional regulatory complexes. Facilitates HIF alpha proteins hydroxylation via interaction with EGLN1/PHD2, leading to recruit EGLN1/PHD2 to the HSP90 pathway. This chain is Prostaglandin E synthase 3 (PTGES3), found in Bos taurus (Bovine).